A 230-amino-acid polypeptide reads, in one-letter code: Response regulator MprA (230 aa).

In terms of domain architecture, Response regulatory spans arginine 4–leucine 118. Aspartate 48 carries the post-translational modification 4-aspartylphosphate. A DNA-binding region (ompR/PhoB-type) is located at residues serine 129–glutamate 227.

Phosphorylated and dephosphorylated by MprB.

It localises to the cytoplasm. Functionally, member of the two-component regulatory system MprB/MprA which contributes to maintaining a balance among several systems involved in stress resistance and is required for establishment and maintenance of persistent infection in the host. Functions as a transcriptional regulator that recognizes a 19-bp nucleotide motif comprizing two loosely conserved 8-bp direct DNA-binding motif repeats separated by a 3-bp spacer region. The sequence is that of Response regulator MprA (mprA) from Mycobacterium tuberculosis (strain ATCC 25177 / H37Ra).